A 252-amino-acid chain; its full sequence is MNILLTNDDGIEAEGINTLAELLSKYHNVTMVAPENQRSASSHSITIYEPIIVKQVKKPYNIEAYSISGTPADCVRVALDKLVPDNIDMVISGINKGLNIGNDILYSGTVSAAIEGAMYKVPSMAVSAQFIKNKKENYKIAAKYALGMLNRLKKEDLKNDVVLNLNIPFCSEEEIKGIKVCKVGNKIFNTRFSEEIDEEGNKVLKLEGDINKDIYEGTDVYYIRNKYVTLTPLHYDLTNFNILEETEQLFLS.

A divalent metal cation is bound by residues aspartate 8, aspartate 9, serine 39, and asparagine 95.

Belongs to the SurE nucleotidase family. A divalent metal cation is required as a cofactor.

Its subcellular location is the cytoplasm. The catalysed reaction is a ribonucleoside 5'-phosphate + H2O = a ribonucleoside + phosphate. Functionally, nucleotidase that shows phosphatase activity on nucleoside 5'-monophosphates. The sequence is that of 5'-nucleotidase SurE from Clostridium botulinum (strain Okra / Type B1).